Consider the following 212-residue polypeptide: Penicillin-binding protein activator LpoB (212 aa).

An N-terminal signal peptide occupies residues 1–19 (MTKMHRYAAIAALAIFLSG). The N-palmitoyl cysteine moiety is linked to residue C20. A lipid anchor (S-diacylglycerol cysteine) is attached at C20. The disordered stretch occupies residues 28 to 73 (PVEEVKPAPEQPAQPPQPPVVPSVPTIPQQPGPIEHEDQTGQPAPK). The segment covering 36 to 49 (PEQPAQPPQPPVVP) has biased composition (pro residues).

Belongs to the LpoB family. In terms of assembly, interacts with PBP1b.

It is found in the cell outer membrane. Regulator of peptidoglycan synthesis that is essential for the function of penicillin-binding protein 1B (PBP1b). This Salmonella typhimurium (strain LT2 / SGSC1412 / ATCC 700720) protein is Penicillin-binding protein activator LpoB.